We begin with the raw amino-acid sequence, 343 residues long: Heme A synthase (343 aa).

The next 8 helical transmembrane spans lie at valine 13–alanine 33, histidine 96–isoleucine 116, valine 130–leucine 150, leucine 165–glycine 185, glycine 197–alanine 217, leucine 258–alanine 278, leucine 290–leucine 310, and methionine 311–alanine 331. Residue histidine 260 participates in heme binding. Residue histidine 322 coordinates heme.

The protein belongs to the COX15/CtaA family. Type 2 subfamily. In terms of assembly, interacts with CtaB. Heme b is required as a cofactor.

The protein resides in the cell membrane. It catalyses the reaction Fe(II)-heme o + 2 A + H2O = Fe(II)-heme a + 2 AH2. Its pathway is porphyrin-containing compound metabolism; heme A biosynthesis; heme A from heme O: step 1/1. Functionally, catalyzes the conversion of heme O to heme A by two successive hydroxylations of the methyl group at C8. The first hydroxylation forms heme I, the second hydroxylation results in an unstable dihydroxymethyl group, which spontaneously dehydrates, resulting in the formyl group of heme A. This is Heme A synthase from Caulobacter sp. (strain K31).